The following is a 161-amino-acid chain: Cytochrome b6-f complex subunit 4 (161 aa).

The next 3 helical transmembrane spans lie at 37 to 57 (LLYI…GLAV), 96 to 116 (LLGV…PFIE), and 132 to 152 (SVFL…TLPI).

The protein belongs to the cytochrome b family. PetD subfamily. As to quaternary structure, the 4 large subunits of the cytochrome b6-f complex are cytochrome b6, subunit IV (17 kDa polypeptide, PetD), cytochrome f and the Rieske protein, while the 4 small subunits are PetG, PetL, PetM and PetN. The complex functions as a dimer.

It localises to the cellular thylakoid membrane. Its function is as follows. Component of the cytochrome b6-f complex, which mediates electron transfer between photosystem II (PSII) and photosystem I (PSI), cyclic electron flow around PSI, and state transitions. The chain is Cytochrome b6-f complex subunit 4 from Acaryochloris marina (strain MBIC 11017).